Reading from the N-terminus, the 193-residue chain is Phosphoheptose isomerase (193 aa).

In terms of domain architecture, SIS spans 37 to 193 (IAQSFKNEKK…LIIEKEMQKN (157 aa)). 52–54 (NGG) lines the substrate pocket. 2 residues coordinate Zn(2+): His61 and Glu65. Substrate contacts are provided by residues Glu65, 93–94 (ND), 119–121 (STS), Ser124, and Gln172. Residues Gln172 and His180 each coordinate Zn(2+).

The protein belongs to the SIS family. GmhA subfamily. As to quaternary structure, homotetramer. The cofactor is Zn(2+).

The protein resides in the cytoplasm. It catalyses the reaction 2 D-sedoheptulose 7-phosphate = D-glycero-alpha-D-manno-heptose 7-phosphate + D-glycero-beta-D-manno-heptose 7-phosphate. The protein operates within carbohydrate biosynthesis; D-glycero-D-manno-heptose 7-phosphate biosynthesis; D-glycero-alpha-D-manno-heptose 7-phosphate and D-glycero-beta-D-manno-heptose 7-phosphate from sedoheptulose 7-phosphate: step 1/1. Functionally, catalyzes the isomerization of sedoheptulose 7-phosphate in D-glycero-D-manno-heptose 7-phosphate. This is Phosphoheptose isomerase from Buchnera aphidicola subsp. Acyrthosiphon pisum (strain 5A).